We begin with the raw amino-acid sequence, 296 residues long: Elongation factor Ts (296 aa).

The interval 79 to 82 (TDFV) is involved in Mg(2+) ion dislocation from EF-Tu.

The protein belongs to the EF-Ts family.

It is found in the cytoplasm. In terms of biological role, associates with the EF-Tu.GDP complex and induces the exchange of GDP to GTP. It remains bound to the aminoacyl-tRNA.EF-Tu.GTP complex up to the GTP hydrolysis stage on the ribosome. The polypeptide is Elongation factor Ts (tsf) (Spiroplasma citri).